A 420-amino-acid polypeptide reads, in one-letter code: Tyrosine--tRNA ligase (420 aa).

Y36 is a binding site for L-tyrosine. Residues 41-50 carry the 'HIGH' region motif; sequence PTADSLHIGH. Positions 170 and 174 each coordinate L-tyrosine. A 'KMSKS' region motif is present at residues 231–235; sequence KFGKS. K234 serves as a coordination point for ATP. Residues 353–420 form the S4 RNA-binding domain; that stretch reads SNIIDVLIET…KKKYFMVNYK (68 aa).

Belongs to the class-I aminoacyl-tRNA synthetase family. TyrS type 1 subfamily. As to quaternary structure, homodimer.

Its subcellular location is the cytoplasm. It catalyses the reaction tRNA(Tyr) + L-tyrosine + ATP = L-tyrosyl-tRNA(Tyr) + AMP + diphosphate + H(+). In terms of biological role, catalyzes the attachment of tyrosine to tRNA(Tyr) in a two-step reaction: tyrosine is first activated by ATP to form Tyr-AMP and then transferred to the acceptor end of tRNA(Tyr). The chain is Tyrosine--tRNA ligase from Staphylococcus haemolyticus (strain JCSC1435).